The following is a 124-amino-acid chain: Transcription initiation factor IIA subunit 2 (124 aa).

Belongs to the TFIIA subunit 2 family. In terms of assembly, TFIIA is a heterodimer composed of the large TOA1 and the small TOA2 subunits.

Its subcellular location is the nucleus. In terms of biological role, TFIIA is a component of the transcription machinery of RNA polymerase II and plays an important role in transcriptional activation. TFIIA in a complex with tbp mediates transcriptional activity. The polypeptide is Transcription initiation factor IIA subunit 2 (TOA2) (Cryptococcus neoformans var. neoformans serotype D (strain JEC21 / ATCC MYA-565) (Filobasidiella neoformans)).